Here is a 730-residue protein sequence, read N- to C-terminus: Elongation factor 2 (730 aa).

The region spanning 19–228 (QRIRNIGIVA…TGVSFKDVYD (210 aa)) is the tr-type G domain. Residues 28–35 (AHIDHGKT), 94–98 (DTPGH), and 148–151 (NKVD) contribute to the GTP site. Histidine 596 is subject to Diphthamide.

It belongs to the TRAFAC class translation factor GTPase superfamily. Classic translation factor GTPase family. EF-G/EF-2 subfamily.

It is found in the cytoplasm. Functionally, catalyzes the GTP-dependent ribosomal translocation step during translation elongation. During this step, the ribosome changes from the pre-translocational (PRE) to the post-translocational (POST) state as the newly formed A-site-bound peptidyl-tRNA and P-site-bound deacylated tRNA move to the P and E sites, respectively. Catalyzes the coordinated movement of the two tRNA molecules, the mRNA and conformational changes in the ribosome. The chain is Elongation factor 2 from Methanosarcina acetivorans (strain ATCC 35395 / DSM 2834 / JCM 12185 / C2A).